We begin with the raw amino-acid sequence, 65 residues long: Large ribosomal subunit protein bL35 (65 aa).

Residues 1 to 51 form a disordered region; the sequence is MPKMKTNRAAAKRFKKTANGGLKSANAYTSHRFHGKTKKQRRQLRGTDMMD. Residues 31 to 44 show a composition bias toward basic residues; sequence HRFHGKTKKQRRQL.

It belongs to the bacterial ribosomal protein bL35 family.

This is Large ribosomal subunit protein bL35 from Pediococcus pentosaceus (strain ATCC 25745 / CCUG 21536 / LMG 10740 / 183-1w).